The chain runs to 220 residues: Ribonuclease HII (220 aa).

Residues 1-210 (MKVAGVDEAG…ARKIEERFRK (210 aa)) form the RNase H type-2 domain. A divalent metal cation contacts are provided by Asp-7, Glu-8, and Asp-105.

The protein belongs to the RNase HII family. Mn(2+) serves as cofactor. The cofactor is Mg(2+).

The protein resides in the cytoplasm. It catalyses the reaction Endonucleolytic cleavage to 5'-phosphomonoester.. In terms of biological role, endonuclease that specifically degrades the RNA of RNA-DNA hybrids. The sequence is that of Ribonuclease HII (rnhB) from Pyrococcus horikoshii (strain ATCC 700860 / DSM 12428 / JCM 9974 / NBRC 100139 / OT-3).